Here is a 780-residue protein sequence, read N- to C-terminus: ATP-dependent 6-phosphofructokinase, muscle type (780 aa).

Thr-2 carries the N-acetylthreonine modification. Residues 2–390 form an N-terminal catalytic PFK domain 1 region; that stretch reads THEEHHAART…NWEVYKLLAH (389 aa). Residues Gly-25, 88 to 89, and 118 to 121 contribute to the ATP site; these read RC and GDGS. Asp-119 contributes to the Mg(2+) binding site. Ser-133 is modified (phosphoserine). Residues 164-166, Arg-201, 208-210, Glu-264, Arg-292, and 298-301 contribute to the substrate site; these read SID, MGR, and HVQR. Catalysis depends on Asp-166, which acts as the Proton acceptor. Ser-377 is modified (phosphoserine). Positions 391–401 are interdomain linker; that stretch reads IRPPAPKSGSY. The C-terminal regulatory PFK domain 2 stretch occupies residues 402–780; sequence TVAVMNVGAP…SRKRSGEATV (379 aa). Beta-D-fructose 2,6-bisphosphate is bound by residues Arg-471 and 528–532; that span reads TVSNN. O-linked (GlcNAc) serine glycosylation occurs at Ser-530. At Lys-557 the chain carries N6-(2-hydroxyisobutyryl)lysine. Beta-D-fructose 2,6-bisphosphate contacts are provided by residues Arg-566, 573–575, Glu-629, Arg-655, and 661–664; these read MGG and HMQQ. Ser-667 carries the post-translational modification Phosphoserine. Arg-735 is a beta-D-fructose 2,6-bisphosphate binding site. Ser-775 is modified (phosphoserine; by PKA).

This sequence belongs to the phosphofructokinase type A (PFKA) family. ATP-dependent PFK group I subfamily. Eukaryotic two domain clade 'E' sub-subfamily. In terms of assembly, homo- and heterotetramers. Phosphofructokinase (PFK) enzyme functions as a tetramer composed of different combinations of 3 types of subunits, called PFKM (M), PFKL (L) and PFKP (P). The composition of the PFK tetramer differs according to the tissue type it is present in. The kinetic and regulatory properties of the tetrameric enzyme are dependent on the subunit composition, hence can vary across tissues. Interacts (via C-terminus) with HK1 (via N-terminal spermatogenic cell-specific region). It depends on Mg(2+) as a cofactor. Post-translationally, glcNAcylation decreases enzyme activity.

It localises to the cytoplasm. The catalysed reaction is beta-D-fructose 6-phosphate + ATP = beta-D-fructose 1,6-bisphosphate + ADP + H(+). It participates in carbohydrate degradation; glycolysis; D-glyceraldehyde 3-phosphate and glycerone phosphate from D-glucose: step 3/4. Allosterically activated by ADP, AMP, or fructose 2,6-bisphosphate, and allosterically inhibited by ATP or citrate. In terms of biological role, catalyzes the phosphorylation of D-fructose 6-phosphate to fructose 1,6-bisphosphate by ATP, the first committing step of glycolysis. In Oryctolagus cuniculus (Rabbit), this protein is ATP-dependent 6-phosphofructokinase, muscle type (PFKM).